Here is a 185-residue protein sequence, read N- to C-terminus: Ribosome-recycling factor (185 aa).

It belongs to the RRF family.

It is found in the cytoplasm. In terms of biological role, responsible for the release of ribosomes from messenger RNA at the termination of protein biosynthesis. May increase the efficiency of translation by recycling ribosomes from one round of translation to another. This is Ribosome-recycling factor from Enterobacter sp. (strain 638).